Here is a 235-residue protein sequence, read N- to C-terminus: Small ribosomal subunit protein uS3 (235 aa).

Positions 39-107 (VRQFLNKELA…PAQINIAEVK (69 aa)) constitute a KH type-2 domain. The disordered stretch occupies residues 216–235 (QPEQQPTDKPKKVPRGKGRK).

This sequence belongs to the universal ribosomal protein uS3 family. As to quaternary structure, part of the 30S ribosomal subunit. Forms a tight complex with proteins S10 and S14.

Functionally, binds the lower part of the 30S subunit head. Binds mRNA in the 70S ribosome, positioning it for translation. The chain is Small ribosomal subunit protein uS3 from Aggregatibacter actinomycetemcomitans (Actinobacillus actinomycetemcomitans).